A 477-amino-acid polypeptide reads, in one-letter code: Actin-related protein 7 (477 aa).

Belongs to the actin family. As to quaternary structure, forms a heterodimer with ARP9. Interacts with NPL6. Component of the two forms of the RSC complex composed of at least either RSC1 or RSC2, and ARP7, ARP9, LDB7, NPL6, RSC3, RSC30, RSC4, RSC58, RSC6, RSC8, RSC9, SFH1, STH1, HTL1 and probably RTT102. The complexes interact with histone and histone variant components of centromeric chromatin. Component of the SWI/SNF global transcription activator complex. The 1.14 MDa SWI/SNF complex is composed of 11 different subunits: one copy each of SWI1, SNF2/SWI2, SNF5, SNF12/SWP73, ARP7/SWP61, ARP9/SWP59; two copies each of SWI3, SNF6, SNF11, SWP82; and three copies of TAF14/SWP29.

The protein resides in the nucleus. Component of the chromatin structure remodeling complex (RSC), which is involved in transcription regulation and nucleosome positioning. RSC is responsible for the transfer of a histone octamer from a nucleosome core particle to naked DNA. The reaction requires ATP and involves an activated RSC-nucleosome intermediate. Remodeling reaction also involves DNA translocation, DNA twist and conformational change. As a reconfigurer of centromeric and flanking nucleosomes, RSC complex is required both for proper kinetochore function in chromosome segregation and, via a PKC1-dependent signaling pathway, for organization of the cellular cytoskeleton. This subunit is involved in transcriptional regulation. Heterodimer of ARP7 and ARP9 functions with HMG box proteins to facilitate proper chromatin architecture. Heterodimer formation is necessary for assembly into RSC complex. Part of the SWI/SNF complex, an ATP-dependent chromatin remodeling complex, is required for the positive and negative regulation of gene expression of a large number of genes. It changes chromatin structure by altering DNA-histone contacts within a nucleosome, leading eventually to a change in nucleosome position, thus facilitating or repressing binding of gene-specific transcription factors. This is Actin-related protein 7 (ARP7) from Saccharomyces cerevisiae (strain ATCC 204508 / S288c) (Baker's yeast).